Consider the following 643-residue polypeptide: Ecto-NOX disulfide-thiol exchanger 1 (643 aa).

Residues 142 to 221 enclose the RRM domain; sequence KTVFVGGLPE…GRLHVDFAQA (80 aa). Coiled coils occupy residues 307–342 and 425–570; these read VQSANSHVRRLMNEKATHEQEMEEAKENFKNALTGI and QAYA…EALL.

The protein belongs to the ENOX family. It depends on Cu cation as a cofactor. As to expression, expressed in lymphocyte cells, breast and breast cancer (at protein level). Found in the sera of cancer patients with a wide variety of cancers including breast, prostate, lung and ovarian cancers, leukemias, and lymphomas. Found also in the serum of healthy volunteers or patients with disorders other than cancer. Probably shed into serum by cancer cells.

The protein localises to the cell membrane. The protein resides in the secreted. It localises to the extracellular space. With respect to regulation, not inhibited by the antitumor sulfonylurea LY181984, the vabilloid capsaicin, and retinoids. Probably acts as a terminal oxidase of plasma electron transport from cytosolic NAD(P)H via hydroquinones to acceptors at the cell surface. Hydroquinone oxidase activity alternates with a protein disulfide-thiol interchange/oxidoreductase activity which may control physical membrane displacements associated with vesicle budding or cell enlargement. The activities oscillate with a period length of 24 minutes and play a role in control of the ultradian cellular biological clock. This is Ecto-NOX disulfide-thiol exchanger 1 (ENOX1) from Homo sapiens (Human).